A 220-amino-acid chain; its full sequence is N-(5'-phosphoribosyl)anthranilate isomerase (220 aa).

This sequence belongs to the TrpF family.

It catalyses the reaction N-(5-phospho-beta-D-ribosyl)anthranilate = 1-(2-carboxyphenylamino)-1-deoxy-D-ribulose 5-phosphate. Its pathway is amino-acid biosynthesis; L-tryptophan biosynthesis; L-tryptophan from chorismate: step 3/5. The sequence is that of N-(5'-phosphoribosyl)anthranilate isomerase from Agrobacterium fabrum (strain C58 / ATCC 33970) (Agrobacterium tumefaciens (strain C58)).